A 1829-amino-acid chain; its full sequence is Sodium channel protein type 4 subunit alpha A (1829 aa).

Residues 1–124 (MARLLPPTGT…RGAIKILIHS (124 aa)) lie on the Cytoplasmic side of the membrane. Positions 32–52 (STREELEGAEEEPQAPSSDLE) are disordered. Residues 106–421 (CISPFSIVRR…VVAMAYDEQN (316 aa)) form an I repeat. The chain crosses the membrane as a helical span at residues 125-143 (LFSMFIMITILSNCVFMTM). Topologically, residues 144–150 (SNPPAWS) are extracellular. The helical transmembrane segment at 151–171 (KTVEYVFTGIYTFEATVKVLS) threads the bilayer. The Cytoplasmic segment spans residues 172–185 (RGFCIGPFTFLRDP). A helical transmembrane segment spans residues 186–203 (WNWLDFMVISMAYVTEFV). At 204–209 (DLGNVS) the chain is on the extracellular side. Asn-207 carries N-linked (GlcNAc...) asparagine glycosylation. Residues 210-226 (ALRTFRVLRALKTITVI) traverse the membrane as a helical segment. Over 227-245 (PGLKTIVGALIQSVKKMID) the chain is Cytoplasmic. A helical membrane pass occupies residues 246 to 265 (VMILTIFALAVFALIGLQLF). The Extracellular portion of the chain corresponds to 266–358 (MGNLRQKCIR…PNYGYTSYDN (93 aa)). A disulfide bridge connects residues Cys-273 and Cys-327. N-linked (GlcNAc...) asparagine glycosylation is found at Asn-280, Asn-293, and Asn-329. A disulfide bridge connects residues Cys-336 and Cys-342. Residues 359 to 383 (FGWAFLALFRLMTQDFWENLFQLTL) constitute an intramembrane region (pore-forming). The Extracellular portion of the chain corresponds to 384-390 (RAAGKTY). The helical transmembrane segment at 391–411 (MIFFVVVIFLGSFYLINLILA) threads the bilayer. At 412–582 (VVAMAYDEQN…KWVHFVVMDP (171 aa)) the chain is on the cytoplasmic side. Over residues 446 to 467 (ETGSKASLASQKTQSRGSNRTG) the composition is skewed to polar residues. Residues 446–468 (ETGSKASLASQKTQSRGSNRTGS) form a disordered region. The II repeat unit spans residues 564 to 836 (CCAPWILFKK…QIAIGRITRG (273 aa)). Residues 583–601 (FVDLGITICIVLNTLFMAM) traverse the membrane as a helical segment. Residues 602 to 612 (EHYPMSPHFEH) lie on the Extracellular side of the membrane. A helical membrane pass occupies residues 613 to 632 (VLSVGNLVFTGIFTAEMVFK). Over 633–646 (LIAMDPYYYFQVGW) the chain is Cytoplasmic. A helical membrane pass occupies residues 647-666 (NIFDSIIVTLSLVELGLANV). Residues 667-668 (QG) lie on the Extracellular side of the membrane. The chain crosses the membrane as a helical span at residues 669 to 686 (LSVLRSFRLLRVFKLAKS). Residues 687 to 702 (WPTLNMLIKIIGNSVG) are Cytoplasmic-facing. The chain crosses the membrane as a helical span at residues 703-721 (ALGNLTLVLAIIVFIFAVV). The Extracellular segment spans residues 722–750 (GMQLFGKSYKDCVCKISEDCELPRWHMND). Cys-735 and Cys-741 form a disulfide bridge. Positions 751–771 (FFHSFLIVFRILCGEWIETMW) form an intramembrane region, pore-forming. Over 772–782 (DCMEVAGASMC) the chain is Extracellular. A disulfide bond links Cys-773 and Cys-782. Residues 783–801 (LIVFMMVMVIGNLVVLNLF) form a helical membrane-spanning segment. Over 802 to 998 (LALLLSSFSG…TCFTIVEHDY (197 aa)) the chain is Cytoplasmic. The disordered stretch occupies residues 901 to 957 (SDVEEDEDSESSDEEDAKATLNDGDSSVCSTVDYQPPEPEPEPEEVEEEEPEPEEPE). Over residues 902 to 916 (DVEEDEDSESSDEED) the composition is skewed to acidic residues. Positions 923–933 (DGDSSVCSTVD) are enriched in polar residues. Acidic residues predominate over residues 939-957 (PEPEPEEVEEEEPEPEEPE). The stretch at 979–1292 (WGKKWWNLRR…KKYYNAMKKL (314 aa)) is one III repeat. The helical transmembrane segment at 999–1016 (FETFIIFMILLSSGALAF) threads the bilayer. Residues 1017–1029 (EDINIERRRVIKT) are Extracellular-facing. The chain crosses the membrane as a helical span at residues 1030 to 1048 (ILEYADKVFTYIFIVEMLL). Residues 1049–1062 (KWVAYGFKTYFTNA) are Cytoplasmic-facing. Residues 1063–1081 (WCWLDFLIVDVSLVSLTAN) form a helical membrane-spanning segment. Topologically, residues 1082–1089 (LMGYSELG) are extracellular. A helical membrane pass occupies residues 1090–1108 (AIKSLRTLRALRPLRALSR). Residues 1109 to 1125 (FEGMRVVVNALVGAIPS) are Cytoplasmic-facing. A helical membrane pass occupies residues 1126–1145 (IFNVLLVCLIFWLIFSIMGV). The Extracellular portion of the chain corresponds to 1146–1196 (NLFAGKFYHCINTTTEERIPMDVVNNKSDCMALMYTNEVRWVNVKVNYDNV). A disulfide bridge links Cys-1155 with Cys-1175. 2 N-linked (GlcNAc...) asparagine glycosylation sites follow: Asn-1157 and Asn-1171. The pore-forming intramembrane region spans 1197 to 1218 (GLGYLSLLQIATFKGWMDIMYA). The Extracellular portion of the chain corresponds to 1219-1235 (AVDSREVDEQPSYEINL). A helical membrane pass occupies residues 1236–1257 (YMYLYFVIFIIFGSFFTLNLFI). The Cytoplasmic portion of the chain corresponds to 1258 to 1320 (GVIIDNFNQQ…LVFDFISKQF (63 aa)). Residues 1276 to 1278 (IFM) form an important for rapid channel inactivation region. An IV repeat occupies 1301–1599 (IPRPSNIIQG…WEKFDVDATQ (299 aa)). A helical membrane pass occupies residues 1321-1338 (FDIFIMVLICLNMVTMMI). Topologically, residues 1339–1349 (ETDDQSAEKEY) are extracellular. A helical membrane pass occupies residues 1350 to 1368 (VLYQINLVFIVVFTSECVL). Residues 1369–1380 (KLFALRQYFFTI) are Cytoplasmic-facing. The helical transmembrane segment at 1381-1398 (GWNVFDFVVVILSIAGLM) threads the bilayer. The Extracellular segment spans residues 1399-1411 (LSDIIEKYFVSPT). Residues 1412–1428 (LFRVIRLARIGRVLRLI) traverse the membrane as a helical segment. At 1429 to 1447 (RGAKGIRTLLFALMMSLPA) the chain is on the cytoplasmic side. The helical transmembrane segment at 1448-1465 (LFNIGLLLFLIMFIFSIF) threads the bilayer. At 1466–1487 (GMSNFAYVKKQAGIDDIFNFET) the chain is on the extracellular side. An intramembrane region (pore-forming) is located at residues 1488-1510 (FGGSIICLFEITTSAGWDGLLLP). Over 1511 to 1540 (ILNSGPPDCDPDFENPGTDVRGNCGNPGMG) the chain is Extracellular. Cys-1519 and Cys-1534 are disulfide-bonded. The helical transmembrane segment at 1541 to 1563 (IMFFCSYIIMSFLVVVNMYIAII) threads the bilayer. The Cytoplasmic segment spans residues 1564 to 1829 (LENFNNAQEE…NATTIKESIV (266 aa)). Residues 1693–1722 (EERAAIAVQRIYRRHLLKRAIRYACFMRRS) form the IQ domain. A disordered region spans residues 1765–1786 (PMRPNSQPPKPSQVTQTRASVT).

This sequence belongs to the sodium channel (TC 1.A.1.10) family. Nav1.4/SCN4A subfamily. As to quaternary structure, voltage-gated sodium (Nav) channels consist of an ion-conducting alpha subunit which is functional on its own associated with regulatory beta subunits. In terms of tissue distribution, expressed in skeletal muscle, brain, spinal cord, and eye.

Its subcellular location is the cell membrane. It carries out the reaction Na(+)(in) = Na(+)(out). Pore-forming subunit of a voltage-gated sodium (Nav) channel that directly mediates the depolarizing phase of action potentials in excitable membranes. Navs, also called VGSCs (voltage-gated sodium channels) or VDSCs (voltage-dependent sodium channels), operate by switching between closed and open conformations depending on the voltage difference across the membrane. In the open conformation they allow Na(+) ions to selectively pass through the pore, along their electrochemical gradient. The influx of Na+ ions provokes membrane depolarization, initiating the propagation of electrical signals throughout cells and tissues. This is Sodium channel protein type 4 subunit alpha A (scn4aa) from Danio rerio (Zebrafish).